Here is a 275-residue protein sequence, read N- to C-terminus: Transcriptional coregulator psa-3 (275 aa).

Residues 91 to 161 enclose the MEIS N-terminal domain; it reads TDDIKRLFQS…RRTVCHEALV (71 aa). A disordered region spans residues 239–275; the sequence is QLPPNFLKPSNEKSPEKSEEEKSQKPSSSPKSPSLSD. Residues 248–262 show a composition bias toward basic and acidic residues; the sequence is SNEKSPEKSEEEKSQ. Positions 263–275 are enriched in low complexity; the sequence is KPSSSPKSPSLSD.

Interacts with homeobox protein ceh-20; the interaction is direct, facilitates nuclear localization of ceh-20 and may stabilize interaction of a ceh-20-nob-1 complex with DNA.

The protein localises to the nucleus. Functionally, probable transcription coregulator. Required for asymmetric cell divisions of the T hypodermal cells, and cell fate determination, in concert with homeobox proteins nob-1 and ceh-20. Acts downstream of the Wnt signaling pathway, and of ceh-20 and nob-1. The protein is Transcriptional coregulator psa-3 of Caenorhabditis elegans.